A 290-amino-acid polypeptide reads, in one-letter code: MPTLQGLRRKVKTIQNISHIIHSMETLSMVKIRALQDKSLRLKPYTEELNNILMELITRLPNEYLNHPLIRERSVYKTGILVFTSDLGFCGSYNLQIIESLKKFIEGKRAQNLVFYSIGFYAQRYLSSNNFNIRKKYIKFLEDTSFSQAKILSKDLLDDFLNYVIDELYVIYFEFINIVKQEVRIKKILPMIPVEVKERKEEYFLFLPSLSSILDPLLMDIFETQIHQIMLDSAASEQAFRRFAMKRAYDNAQKLHSKLIFQLNQLRQTQITKELLDITSSIEAMKEEVK.

Belongs to the ATPase gamma chain family. As to quaternary structure, F-type ATPases have 2 components, CF(1) - the catalytic core - and CF(0) - the membrane proton channel. CF(1) has five subunits: alpha(3), beta(3), gamma(1), delta(1), epsilon(1). CF(0) has three main subunits: a, b and c.

The protein resides in the cell inner membrane. Its function is as follows. Produces ATP from ADP in the presence of a proton gradient across the membrane. The gamma chain is believed to be important in regulating ATPase activity and the flow of protons through the CF(0) complex. This is ATP synthase gamma chain from Dictyoglomus turgidum (strain DSM 6724 / Z-1310).